The following is a 253-amino-acid chain: Solute carrier family 66 member 2 (253 aa).

The next 6 helical transmembrane spans lie at G7–F27, F49–F69, H72–L92, F125–L145, A150–P170, and V214–T234. Residues H14–Q80 enclose the PQ-loop 1 domain. One can recognise a PQ-loop 2 domain in the interval A160–C215.

Its subcellular location is the membrane. This is Solute carrier family 66 member 2 (SLC66A2) from Bos taurus (Bovine).